We begin with the raw amino-acid sequence, 201 residues long: Holliday junction branch migration complex subunit RuvA (201 aa).

Residues 1-64 are domain I; it reads MFAYIKGVLA…EFSHTLYGFL (64 aa). The interval 65–143 is domain II; that stretch reads SYQERDIFEI…AIGHLDTSDH (79 aa). Positions 144–153 are flexible linker; that stretch reads IEPLTQDPKS. The interval 153–201 is domain III; sequence SKSVQDAMLALINLGYNQTTAQKAIKQGMKELPEEIDLAQLITVALKHV.

Belongs to the RuvA family. In terms of assembly, homotetramer. Forms an RuvA(8)-RuvB(12)-Holliday junction (HJ) complex. HJ DNA is sandwiched between 2 RuvA tetramers; dsDNA enters through RuvA and exits via RuvB. An RuvB hexamer assembles on each DNA strand where it exits the tetramer. Each RuvB hexamer is contacted by two RuvA subunits (via domain III) on 2 adjacent RuvB subunits; this complex drives branch migration. In the full resolvosome a probable DNA-RuvA(4)-RuvB(12)-RuvC(2) complex forms which resolves the HJ.

Its subcellular location is the cytoplasm. Functionally, the RuvA-RuvB-RuvC complex processes Holliday junction (HJ) DNA during genetic recombination and DNA repair, while the RuvA-RuvB complex plays an important role in the rescue of blocked DNA replication forks via replication fork reversal (RFR). RuvA specifically binds to HJ cruciform DNA, conferring on it an open structure. The RuvB hexamer acts as an ATP-dependent pump, pulling dsDNA into and through the RuvAB complex. HJ branch migration allows RuvC to scan DNA until it finds its consensus sequence, where it cleaves and resolves the cruciform DNA. In Protochlamydia amoebophila (strain UWE25), this protein is Holliday junction branch migration complex subunit RuvA.